The sequence spans 563 residues: Minor fimbrium subunit Mfa1 (563 aa).

Positions 1 to 19 are cleaved as a signal peptide; that stretch reads MKLNKMFLVGALLSLGFAS. C20 carries the N-palmitoyl cysteine lipid modification. Residue C20 is the site of S-diacylglycerol cysteine attachment. The propeptide occupies 20–49; that stretch reads CSKEGNGPDPDNAAKSYMSMTLSMPMGSAR. Residues 504-543 form a disordered region; that stretch reads LVPDPDPSNPENPNNPDPNPDEPGTPVPTDPENPLPDQDT. Residues 505-537 show a composition bias toward pro residues; that stretch reads VPDPDPSNPENPNNPDPNPDEPGTPVPTDPENP.

Belongs to the bacteroidetes fimbrillin superfamily. As to quaternary structure, structural component of the fimbrial stalk. Minor fimbriae are composed of a structural subunit, most often Mfa1, and the accessory subunits Mfa3, Mfa4 and Mfa5. Mfa1 interacts with Mfa2; this anchors the fimbrium in the membrane. Fimbrium assembly occurs by linear, head-to-tail oligomerization of fimbrial subunits. This is mediated via insertion of a C-terminal beta-strand from one subunit into a groove in the N-terminal domain of the following subunit. Interacts with S.gordonii ssp5.

The protein localises to the fimbrium. The protein resides in the cell outer membrane. In terms of biological role, structural subunit of the minor fimbriae. These filamentous pili are attached to the cell surface; they mediate biofilm formation, adhesion onto host cells and onto other bacteria that are part of the oral microbiome. They play an important role in invasion of periodontal tissues and are recognized as major virulence factors. Mfa1 orthologs from different strains have highly divergent sequences, and this correlates with pathogenicity. The polypeptide is Minor fimbrium subunit Mfa1 (Porphyromonas gingivalis (strain ATCC 33277 / DSM 20709 / CIP 103683 / JCM 12257 / NCTC 11834 / 2561)).